The sequence spans 257 residues: Ribonuclease PH (257 aa).

Phosphate is bound by residues Arg86 and 124-126; that span reads GTR.

The protein belongs to the RNase PH family. As to quaternary structure, homohexameric ring arranged as a trimer of dimers.

It catalyses the reaction tRNA(n+1) + phosphate = tRNA(n) + a ribonucleoside 5'-diphosphate. Functionally, phosphorolytic 3'-5' exoribonuclease that plays an important role in tRNA 3'-end maturation. Removes nucleotide residues following the 3'-CCA terminus of tRNAs; can also add nucleotides to the ends of RNA molecules by using nucleoside diphosphates as substrates, but this may not be physiologically important. Probably plays a role in initiation of 16S rRNA degradation (leading to ribosome degradation) during starvation. This chain is Ribonuclease PH, found in Sulfurihydrogenibium sp. (strain YO3AOP1).